Consider the following 217-residue polypeptide: N-(5'-phosphoribosyl)anthranilate isomerase (217 aa).

This sequence belongs to the TrpF family.

It catalyses the reaction N-(5-phospho-beta-D-ribosyl)anthranilate = 1-(2-carboxyphenylamino)-1-deoxy-D-ribulose 5-phosphate. It participates in amino-acid biosynthesis; L-tryptophan biosynthesis; L-tryptophan from chorismate: step 3/5. This Chlorobium phaeovibrioides (strain DSM 265 / 1930) (Prosthecochloris vibrioformis (strain DSM 265)) protein is N-(5'-phosphoribosyl)anthranilate isomerase.